A 245-amino-acid polypeptide reads, in one-letter code: Heavy metal-associated isoprenylated plant protein 1 (245 aa).

The 65-residue stretch at 28–92 (PVHVVLKIDF…KLQKKSKKKV (65 aa)) folds into the HMA 1 domain. The a metal cation site is built by cysteine 39 and cysteine 42. The disordered stretch occupies residues 91–113 (KVELISPKPKKDTKENNEKKAND). The span at 99–113 (PKKDTKENNEKKAND) shows a compositional bias: basic and acidic residues. The HMA 2 domain maps to 121–188 (VTTVVLKVNC…KLKKTVQVVP (68 aa)). A metal cation is bound by residues cysteine 132 and cysteine 135. Position 242 is a cysteine methyl ester (cysteine 242). Residue cysteine 242 is the site of S-farnesyl cysteine attachment. Residues 243-245 (SVM) constitute a propeptide, removed in mature form.

It belongs to the HIPP family.

In terms of biological role, heavy-metal-binding protein. In Arabidopsis thaliana (Mouse-ear cress), this protein is Heavy metal-associated isoprenylated plant protein 1.